Here is a 167-residue protein sequence, read N- to C-terminus: Bacterial non-heme ferritin (167 aa).

The 145-residue stretch at 1–145 (MLSKDIIKLL…DILDKIELIG (145 aa)) folds into the Ferritin-like diiron domain. Fe cation contacts are provided by Glu-17, Glu-50, His-53, Glu-94, and Gln-127.

This sequence belongs to the ferritin family. Prokaryotic subfamily. Homooligomer of 24 subunits that assemble into a spherical protein shell (12 +/- 1 nM diameter) that can sequester at least 2000 iron atoms.

It is found in the cytoplasm. The enzyme catalyses 4 Fe(2+) + O2 + 6 H2O = 4 iron(III) oxide-hydroxide + 12 H(+). Functionally, iron-storage protein. This chain is Bacterial non-heme ferritin (ftnA), found in Helicobacter pylori (strain ATCC 700392 / 26695) (Campylobacter pylori).